Consider the following 549-residue polypeptide: Dicarboxylate transporter 2.2, chloroplastic (549 aa).

A chloroplast-targeting transit peptide spans 1-54; sequence MESLALRSISLSASYLSLHRSSSKSFALLPPSISVHTSPTLRSLSISSPRFTLR. Residues 57 to 79 form a disordered region; sequence ASSLPEEQNKPQPPPPSPPQPQG. Pro residues predominate over residues 67–77; sequence PQPPPPSPPQP. Helical transmembrane passes span 79–99, 115–135, 151–171, 220–240, 247–267, 294–314, 344–364, 365–385, 403–423, 436–456, 470–490, and 523–543; these read GAKLIPLAISVSIGLIVRFLI, IFLFTISGLVLGPLPVGAWAF, TAFAAFTNELIWLIAISFFFA, AGGVFLPVIKSLAISAGSYPG, LGSFLIQTQLQCSGASGAILL, WFKVASVPAFVSLLCTPLIIY, NEWIMLGAMAFTVSLWVFGEA, IGIASVVSAMIGLSTLLLLGV, WFAVLIGMAGQLTNLGVVAWM, LTWPASFIILQACYLLIHYLF, FLAMQIAAGVPGVLAALCLAF, and VGFVMALVQAIIWGGVGSFWW.

Belongs to the SLC13A/DASS transporter (TC 2.A.47) family. DIT1 subfamily. As to expression, expressed in roots, rosette and cauline leaves, stems, flowers and siliques.

It localises to the plastid. Its subcellular location is the chloroplast inner membrane. In terms of biological role, may be involved in the transport of dicarboxylate compounds. The polypeptide is Dicarboxylate transporter 2.2, chloroplastic (DIT2-2) (Arabidopsis thaliana (Mouse-ear cress)).